The following is a 666-amino-acid chain: NADH-ubiquinone oxidoreductase chain 5 (666 aa).

17 helical membrane passes run 3 to 23 (LLILFLPLLGSLISGFGGRWL), 31 to 51 (FSTLCVVVSSLFSLLAFFEIG), 59 to 78 (IFLVSWIKSGAFYVSWGFLF), 82 to 101 (TVTMLVVITLVSSLVHIYSI), 119 to 139 (IFTFFMLILVTADNLIQMFLG), 168 to 190 (LIVNRVGDFGLSLGIFLIFWVFN), 211 to 231 (FLGFKLHVLTLISLFLFIGAI), 251 to 271 (TPVSALIHAATMVTAGVFLMI), 283 to 303 (ILFILITFGSLTAFFAAVTGV), 311 to 333 (VIAYSTCSQLGYMIFSCGMSCYD), 337 to 357 (FHLANHAFFKALLFLSAGSVI), 375 to 395 (FMPLTYSVMLIGTLALIGFPF), 421 to 441 (YISFACWLGTMSVFFTSFYSF), 467 to 487 (LLMIFPLIILSIGSIFAGYLI), 524 to 544 (WLPFILSLLGIFFASFVQIFL), 572 to 594 (VLYNRLIVLPILNFGYSISFKIL), and 629 to 649 (YLFFMIFTFCSFSIILVYSYI).

Belongs to the complex I subunit 5 family.

The protein localises to the mitochondrion inner membrane. It carries out the reaction a ubiquinone + NADH + 5 H(+)(in) = a ubiquinol + NAD(+) + 4 H(+)(out). Core subunit of the mitochondrial membrane respiratory chain NADH dehydrogenase (Complex I) that is believed to belong to the minimal assembly required for catalysis. Complex I functions in the transfer of electrons from NADH to the respiratory chain. The immediate electron acceptor for the enzyme is believed to be ubiquinone. The polypeptide is NADH-ubiquinone oxidoreductase chain 5 (ND5) (Chondrus crispus (Carrageen Irish moss)).